A 571-amino-acid chain; its full sequence is Urease subunit alpha (571 aa).

The Urease domain occupies 134-571 (GAIDTHIHFI…LPMAQRYFLF (438 aa)). Positions 139, 141, and 222 each coordinate Ni(2+). The residue at position 222 (Lys222) is an N6-carboxylysine. His224 provides a ligand contact to substrate. Ni(2+)-binding residues include His251 and His277. His325 acts as the Proton donor in catalysis. A Ni(2+)-binding site is contributed by Asp365.

The protein belongs to the metallo-dependent hydrolases superfamily. Urease alpha subunit family. In terms of assembly, heterotrimer of UreA (gamma), UreB (beta) and UreC (alpha) subunits. Three heterotrimers associate to form the active enzyme. Ni cation is required as a cofactor. In terms of processing, carboxylation allows a single lysine to coordinate two nickel ions.

The protein resides in the cytoplasm. The enzyme catalyses urea + 2 H2O + H(+) = hydrogencarbonate + 2 NH4(+). The protein operates within nitrogen metabolism; urea degradation; CO(2) and NH(3) from urea (urease route): step 1/1. The sequence is that of Urease subunit alpha from Bordetella bronchiseptica (strain ATCC BAA-588 / NCTC 13252 / RB50) (Alcaligenes bronchisepticus).